We begin with the raw amino-acid sequence, 385 residues long: 1-deoxy-D-xylulose 5-phosphate reductoisomerase (385 aa).

5 residues coordinate NADPH: Thr-10, Gly-11, Ser-12, Ile-13, and Asn-124. Lys-125 contributes to the 1-deoxy-D-xylulose 5-phosphate binding site. Glu-126 is an NADPH binding site. Residue Asp-150 coordinates Mn(2+). Residues Ser-151, Glu-152, Ser-176, and His-199 each contribute to the 1-deoxy-D-xylulose 5-phosphate site. Position 152 (Glu-152) interacts with Mn(2+). An NADPH-binding site is contributed by Gly-205. Residues Ser-212, Asn-217, Lys-218, and Glu-221 each coordinate 1-deoxy-D-xylulose 5-phosphate. Mn(2+) is bound at residue Glu-221.

This sequence belongs to the DXR family. The cofactor is Mg(2+). Mn(2+) serves as cofactor.

It carries out the reaction 2-C-methyl-D-erythritol 4-phosphate + NADP(+) = 1-deoxy-D-xylulose 5-phosphate + NADPH + H(+). It participates in isoprenoid biosynthesis; isopentenyl diphosphate biosynthesis via DXP pathway; isopentenyl diphosphate from 1-deoxy-D-xylulose 5-phosphate: step 1/6. Catalyzes the NADPH-dependent rearrangement and reduction of 1-deoxy-D-xylulose-5-phosphate (DXP) to 2-C-methyl-D-erythritol 4-phosphate (MEP). The polypeptide is 1-deoxy-D-xylulose 5-phosphate reductoisomerase (Clostridium botulinum (strain Alaska E43 / Type E3)).